The sequence spans 444 residues: MVGSHKASGVLLVLLVVMATTIANGTPVVDKAKNAATAVEDTAKNAATAVGGAAASVGAKVSGAKPGAAVDVKASGAKGDSKTDDSAAFAAAWKEACAAGSTITVPKGEYMVESLEFKGPCKGPVTLELNGNFKAPATVKTTKPHAGWIDFENIADFTLNGNKAIFDGQGSLAWKANDCAKTGKCNSLPINIRFTGLTNSKINSITSTNSKLFHMNILNCKNITLSDIGIDAPPESLNTDGIHIGRSNGVNLIGAKIKTGDDCVSIGDGTENLIVENVECGPGHGISIGSLGRYPNEQPVKGVTVRKCLIKNTDNGVRIKTWPGSPPGIASNILFEDITMDNVSLPVLIDQEYCPYGHCKAGVPSQVKLSDVTIKGIKGTSATKVAVKLMCSKGVPCTNIALSDINLVHNGKEGPAVSACSNIKPILSGKLVPAACTEVAKPGP.

Residues 1-23 (MVGSHKASGVLLVLLVVMATTIA) form the signal peptide. PbH1 repeat units follow at residues 220–246 (CKNITLSDIGIDAPPESLNTDGIHIGR), 247–268 (SNGVNLIGAKIKTGDDCVSIGD), 270–290 (TENLIVENVECGPGHGISIGS), 300–321 (VKGVTVRKCLIKNTDNGVRIKT), and 330–351 (ASNILFEDITMDNVSLPVLIDQ). N-linked (GlcNAc...) asparagine glycosylation is present at Asn-222. Residue Asp-261 is the Proton donor of the active site. Cys-263 and Cys-280 are joined by a disulfide. His-284 is a catalytic residue. Asn-342 carries N-linked (GlcNAc...) asparagine glycosylation. 2 disulfides stabilise this stretch: Cys-391/Cys-397 and Cys-420/Cys-436.

It belongs to the glycosyl hydrolase 28 family.

Its subcellular location is the secreted. It is found in the cell wall. It carries out the reaction [(1-&gt;4)-alpha-D-galacturonosyl](n) + H2O = alpha-D-galacturonate + [(1-&gt;4)-alpha-D-galacturonosyl](n-1). Its function is as follows. May function in depolymerizing pectin during pollen development, germination, and tube growth. Acts as an exo-polygalacturonase. The protein is Exopolygalacturonase clone GBGA483 of Arabidopsis thaliana (Mouse-ear cress).